The chain runs to 412 residues: NF-kappa-B essential modulator (412 aa).

Positions 1 to 48 are disordered; sequence MNKHPWKNQLSEMVQPSGGPAEDQDMLGEESSLGKPAMLHLPSEQGTP. The segment at 1-197 is required for interaction with and ubiquitination by MARCHF2; the sequence is MNKHPWKNQL…REVLQQQHSV (197 aa). Phosphoserine; by IKKB occurs at positions 31 and 43. An interaction with CHUK/IKBKB region spans residues 44-111; that stretch reads EQGTPETLQR…KLVERLSLEK (68 aa). The stretch at 49-345 forms a coiled coil; it reads ETLQRCLEEN…LKVGCHESAR (297 aa). A Phosphoserine modification is found at serine 68. Serine 85 carries the post-translational modification Phosphoserine; by ATM. Residues lysine 111, lysine 139, lysine 143, lysine 226, and lysine 246 each participate in a glycyl lysine isopeptide (Lys-Gly) (interchain with G-Cter in ubiquitin) cross-link. Residues 150-250 form an interaction with TANK region; it reads LGELQESQSR…YDSHIKSSKG (101 aa). Residues 242–343 are ubiquitin-binding (UBAN); the sequence is DSHIKSSKGM…NKLKVGCHES (102 aa). The segment at 246-358 is self-association; that stretch reads KSSKGMQLED…MRKRHVETPQ (113 aa). The interval 249-412 is required for interaction with TNFAIP3; the sequence is KGMQLEDLRQ…LQIHVMECIE (164 aa). The linear polyubiquitin-binding, does not bind to 'Lys-63'-linked polyubiquitin stretch occupies residues 250 to 339; that stretch reads GMQLEDLRQQ…QREFNKLKVG (90 aa). Residue lysine 270 forms a Glycyl lysine isopeptide (Lys-Gly) (interchain with G-Cter in SUMO); alternate linkage. Lysine 270 participates in a covalent cross-link: Glycyl lysine isopeptide (Lys-Gly) (interchain with G-Cter in ubiquitin); alternate. Residues lysine 276, lysine 278, lysine 285, and lysine 295 each participate in a glycyl lysine isopeptide (Lys-Gly) (interchain with G-Cter in ubiquitin) cross-link. Lysine 302 is covalently cross-linked (Glycyl lysine isopeptide (Lys-Gly) (interchain with G-Cter in SUMO); alternate). A Glycyl lysine isopeptide (Lys-Gly) (interchain with G-Cter in ubiquitin); alternate cross-link involves residue lysine 302. Glycyl lysine isopeptide (Lys-Gly) (interchain with G-Cter in ubiquitin) cross-links involve residues lysine 314, lysine 318, and lysine 319. A leucine-zipper region spans residues 315–336; that stretch reads LVEKKEYLQEQLEQLQREFNKL. Serine 369 is subject to Phosphoserine; by IKKB. Residues 375–412 are interaction with CYLD; it reads SNQRRSPPEEPPDFCCPKCQYQAPDMDTLQIHVMECIE. The residue at position 380 (serine 380) is a Phosphoserine. The CCHC NOA-type zinc-finger motif lies at 382 to 412; sequence PEEPPDFCCPKCQYQAPDMDTLQIHVMECIE. Cysteine 390 is a binding site for Zn(2+). Lysine 392 participates in a covalent cross-link: Glycyl lysine isopeptide (Lys-Gly) (interchain with G-Cter in ubiquitin). Residues cysteine 393, histidine 406, and cysteine 410 each coordinate Zn(2+).

Homodimer; disulfide-linked. Component of the I-kappa-B-kinase (IKK) core complex consisting of CHUK, IKBKB and IKBKG; probably four alpha/CHUK-beta/IKBKB dimers are associated with four gamma/IKBKG subunits. The IKK core complex seems to associate with regulatory or adapter proteins to form a IKK-signalosome holo-complex. The IKK complex associates with TERF2IP/RAP1, leading to promote IKK-mediated phosphorylation of RELA/p65. Part of a complex composed of NCOA2, NCOA3, CHUK/IKKA, IKBKB, IKBKG and CREBBP. Interacts with COPS3, CYLD, NALP2, TRPC4AP and PIDD1. Interacts with ATM; the complex is exported from the nucleus. Interacts with TRAF6. Interacts with IKBKE. Interacts with TANK; the interaction is enhanced by IKBKE and TBK1. Part of a ternary complex consisting of TANK, IKBKB and IKBKG. Interacts with ZFAND5. Interacts with RIPK2. Interacts with TNIP1 and TNFAIP3; TNIP1 facilitates the TNFAIP3-mediated de-ubiquitination of IKBKG. Interacts with TNFAIP3; the interaction is induced by TNF stimulation and by polyubiquitin. Binds (via UBAN region) polyubiquitin; binds both 'Lys-63'-linked and linear polyubiquitin, with higher affinity for linear ubiquitin. Interacts with NLRP10. Interacts with TANK; this interaction increases in response to DNA damage. Interacts with USP10; this interaction increases in response to DNA damage. Interacts with ZC3H12A; this interaction increases in response to DNA damage. Interacts with IFIT5; the interaction synergizes the recruitment of IKK to MAP3K7 and enhances IKK phosphorylation. Interacts with TRIM29; this interaction induces IKBKG/NEMO ubiquitination and proteolytic degradation. Interacts with TRIM13; this interaction leads to IKBKG/NEMO ubiquitination. Interacts with ARFIP2. Interacts with RIPK1. Interacts with (ubiquitinated) BCL10; interaction with polyubiquitinated BCL10 via both 'Lys-63'-linked and linear ubiquitin is required for TCR-induced NF-kappa-B activation. Interacts with MARCHF2; during the late stages of macrophage viral and bacterial infection; the interaction leads to ubiquitination and degradation of IKBKG/NEMO. Phosphorylation at Ser-68 attenuates aminoterminal homodimerization. In terms of processing, polyubiquitinated on Lys-278 via 'Lys-63'-linked ubiquitin; the ubiquitination is mediated downstream of NOD2 and RIPK2 and probably plays a role in signaling by facilitating interactions with ubiquitin domain-containing proteins and activates the NF-kappa-B pathway. Polyubiquitinated on Lys-278 and Lys-302 through 'Lys-63'-linked ubiquitin; the ubiquitination is mediated by BCL10, MALT1 and TRAF6 and probably plays a role in signaling by facilitating interactions with ubiquitin domain-containing proteins and activates the NF-kappa-B pathway. Monoubiquitinated on Lys-270 and Lys-302; promotes nuclear export. Polyubiquitinated through 'Lys-27' by TRIM23; involved in antiviral innate and inflammatory responses. Linear polyubiquitinated on Lys-111, Lys-143, Lys-226, Lys-246, Lys-270, Lys-278, Lys-285, Lys-295, Lys-302 and Lys-319; the head-to-tail polyubiquitination is mediated by the LUBAC complex and plays a key role in NF-kappa-B activation. Deubiquitinated by USP10 in a TANK-dependent and -independent manner, leading to the negative regulation of NF-kappa-B signaling upon DNA damage. Ubiquitinated at Lys-319 by MARCHF2 following bacterial and viral infection which leads to its degradation. Polyubiquitinated via 'Lys-29'-linked ubiquitin; leading to lysosomal degradation. Post-translationally, sumoylated on Lys-270 and Lys-302 with SUMO1; the modification results in phosphorylation of Ser-85 by ATM leading to a replacement of the sumoylation by mono-ubiquitination on these residues. Neddylated by TRIM40, resulting in stabilization of NFKBIA and down-regulation of NF-kappa-B activity.

The protein localises to the cytoplasm. Its subcellular location is the nucleus. Regulatory subunit of the IKK core complex which phosphorylates inhibitors of NF-kappa-B thus leading to the dissociation of the inhibitor/NF-kappa-B complex and ultimately the degradation of the inhibitor. Its binding to scaffolding polyubiquitin plays a key role in IKK activation by multiple signaling receptor pathways. Can recognize and bind both 'Lys-63'-linked and linear polyubiquitin upon cell stimulation, with a much highr affinity for linear polyubiquitin. Could be implicated in NF-kappa-B-mediated protection from cytokine toxicity. Essential for viral activation of IRF3. Involved in TLR3- and IFIH1-mediated antiviral innate response; this function requires 'Lys-27'-linked polyubiquitination. The polypeptide is NF-kappa-B essential modulator (Ikbkg) (Mus musculus (Mouse)).